The primary structure comprises 143 residues: ATP synthase subunit b' (143 aa).

Residues 6-26 (ATLPLMALQFVLLAIILNAIF) form a helical membrane-spanning segment.

Belongs to the ATPase B chain family. In terms of assembly, F-type ATPases have 2 components, F(1) - the catalytic core - and F(0) - the membrane proton channel. F(1) has five subunits: alpha(3), beta(3), gamma(1), delta(1), epsilon(1). F(0) has four main subunits: a(1), b(1), b'(1) and c(10-14). The alpha and beta chains form an alternating ring which encloses part of the gamma chain. F(1) is attached to F(0) by a central stalk formed by the gamma and epsilon chains, while a peripheral stalk is formed by the delta, b and b' chains.

The protein localises to the cellular thylakoid membrane. Its function is as follows. F(1)F(0) ATP synthase produces ATP from ADP in the presence of a proton or sodium gradient. F-type ATPases consist of two structural domains, F(1) containing the extramembraneous catalytic core and F(0) containing the membrane proton channel, linked together by a central stalk and a peripheral stalk. During catalysis, ATP synthesis in the catalytic domain of F(1) is coupled via a rotary mechanism of the central stalk subunits to proton translocation. In terms of biological role, component of the F(0) channel, it forms part of the peripheral stalk, linking F(1) to F(0). The b'-subunit is a diverged and duplicated form of b found in plants and photosynthetic bacteria. The polypeptide is ATP synthase subunit b' (Crocosphaera subtropica (strain ATCC 51142 / BH68) (Cyanothece sp. (strain ATCC 51142))).